The sequence spans 104 residues: Large ribosomal subunit protein uL24 (104 aa).

Belongs to the universal ribosomal protein uL24 family. In terms of assembly, part of the 50S ribosomal subunit.

In terms of biological role, one of two assembly initiator proteins, it binds directly to the 5'-end of the 23S rRNA, where it nucleates assembly of the 50S subunit. Functionally, one of the proteins that surrounds the polypeptide exit tunnel on the outside of the subunit. In Pseudomonas fluorescens (strain Pf0-1), this protein is Large ribosomal subunit protein uL24.